Here is a 538-residue protein sequence, read N- to C-terminus: Putative cysteine ligase BshC (538 aa).

Positions V421–N485 form a coiled coil.

The protein belongs to the BshC family.

Involved in bacillithiol (BSH) biosynthesis. May catalyze the last step of the pathway, the addition of cysteine to glucosamine malate (GlcN-Mal) to generate BSH. This is Putative cysteine ligase BshC from Bacillus cytotoxicus (strain DSM 22905 / CIP 110041 / 391-98 / NVH 391-98).